Reading from the N-terminus, the 54-residue chain is RRRRRRGKGKGGKKKKGKKRRRRGRKGKGKGKKKGKRKGKRGGKRRRRRRKGKK.

Residues Arg1–Lys54 form a disordered region.

In terms of tissue distribution, gonads.

The protein resides in the nucleus. Its subcellular location is the chromosome. Its function is as follows. Protamines substitute for histones in the chromatin of sperm during the haploid phase of spermatogenesis. They compact sperm DNA into a highly condensed, stable and inactive complex. In Bolinus brandaris (Purple dye murex), this protein is Sperm protamine P3.